The chain runs to 557 residues: Large cysteine-rich periplasmic protein OmcB (557 aa).

An N-terminal signal peptide occupies residues 1–22 (MSKLIRRVVTVLALTSMASSFA). The propeptide occupies 23–40 (SGKIEAAAAESLATRFIA).

Part of a disulfide cross-linked outer membrane complex (COMC) composed of the major outer membrane porin (MOMP), the small cysteine-rich protein (OmcA) and the large cysteine-rich periplasmic protein (OmcB).

Its subcellular location is the periplasm. In terms of biological role, in elementary bodies (EBs, the infectious stage, which is able to survive outside the host cell) provides the structural integrity of the outer envelope through disulfide cross-links with the small cysteine-rich protein and the major outer membrane porin. It has been described in publications as the Sarkosyl-insoluble COMC (Chlamydia outer membrane complex), and serves as the functional equivalent of peptidoglycan. It is present but the disulfide bonds are reduced in reticulate bodies (RBs). This chain is Large cysteine-rich periplasmic protein OmcB (omcB), found in Chlamydia abortus (strain DSM 27085 / S26/3) (Chlamydophila abortus).